Here is a 575-residue protein sequence, read N- to C-terminus: Adenine deaminase (575 aa).

This sequence belongs to the metallo-dependent hydrolases superfamily. Adenine deaminase family. Requires Mn(2+) as cofactor.

It catalyses the reaction adenine + H2O + H(+) = hypoxanthine + NH4(+). The polypeptide is Adenine deaminase (Nitratidesulfovibrio vulgaris (strain ATCC 29579 / DSM 644 / CCUG 34227 / NCIMB 8303 / VKM B-1760 / Hildenborough) (Desulfovibrio vulgaris)).